The primary structure comprises 522 residues: N-acetylgalactosamine-6-sulfatase (522 aa).

An N-terminal signal peptide occupies residues 1-25; it reads MAAVAAATRWHLLLVLSAAGLGVTG. Residues 27–379 are catalytic domain; that stretch reads PQPPNILLLL…PAMLQGRLTE (353 aa). Ca(2+) is bound by residues Asp-38, Asp-39, and Cys-78. Cys-78 serves as the catalytic Nucleophile. Cys-78 carries the 3-oxoalanine (Cys) modification. His-141 is an active-site residue. Asn-203 is a glycosylation site (N-linked (GlcNAc...) asparagine). Ca(2+) contacts are provided by Asp-288 and Asn-289. The cysteines at positions 308 and 419 are disulfide-linked. A glycan (N-linked (GlcNAc...) asparagine) is linked at Asn-423. 2 disulfide bridges follow: Cys-489–Cys-518 and Cys-501–Cys-507.

This sequence belongs to the sulfatase family. In terms of assembly, homodimer. Ca(2+) is required as a cofactor. In terms of processing, the conversion to 3-oxoalanine (also known as C-formylglycine, FGly), of a serine or cysteine residue in prokaryotes and of a cysteine residue in eukaryotes, is critical for catalytic activity.

Its subcellular location is the lysosome. It carries out the reaction Hydrolysis of the 6-sulfate groups of the N-acetyl-D-galactosamine 6-sulfate units of chondroitin sulfate and of the D-galactose 6-sulfate units of keratan sulfate.. The chain is N-acetylgalactosamine-6-sulfatase (GALNS) from Sus scrofa (Pig).